We begin with the raw amino-acid sequence, 250 residues long: tRNA (guanine-N(1)-)-methyltransferase (250 aa).

Residues G116 and 136-141 (IGDYVL) each bind S-adenosyl-L-methionine.

Belongs to the RNA methyltransferase TrmD family. In terms of assembly, homodimer.

It is found in the cytoplasm. It catalyses the reaction guanosine(37) in tRNA + S-adenosyl-L-methionine = N(1)-methylguanosine(37) in tRNA + S-adenosyl-L-homocysteine + H(+). Functionally, specifically methylates guanosine-37 in various tRNAs. The chain is tRNA (guanine-N(1)-)-methyltransferase from Pseudomonas savastanoi pv. phaseolicola (strain 1448A / Race 6) (Pseudomonas syringae pv. phaseolicola (strain 1448A / Race 6)).